We begin with the raw amino-acid sequence, 213 residues long: Ribosomal RNA large subunit methyltransferase E (213 aa).

S-adenosyl-L-methionine is bound by residues Gly-59, Phe-61, Asp-79, Asp-97, and Asp-121. Lys-161 acts as the Proton acceptor in catalysis.

The protein belongs to the class I-like SAM-binding methyltransferase superfamily. RNA methyltransferase RlmE family.

It localises to the cytoplasm. The enzyme catalyses uridine(2552) in 23S rRNA + S-adenosyl-L-methionine = 2'-O-methyluridine(2552) in 23S rRNA + S-adenosyl-L-homocysteine + H(+). Functionally, specifically methylates the uridine in position 2552 of 23S rRNA at the 2'-O position of the ribose in the fully assembled 50S ribosomal subunit. The protein is Ribosomal RNA large subunit methyltransferase E of Myxococcus xanthus (strain DK1622).